The chain runs to 209 residues: Molybdenum cofactor guanylyltransferase (209 aa).

Residues 14-16 (LAG), K31, and D104 contribute to the GTP site. Residue D104 coordinates Mg(2+).

This sequence belongs to the MobA family. As to quaternary structure, monomer. Mg(2+) serves as cofactor.

It is found in the cytoplasm. The catalysed reaction is Mo-molybdopterin + GTP + H(+) = Mo-molybdopterin guanine dinucleotide + diphosphate. In terms of biological role, transfers a GMP moiety from GTP to Mo-molybdopterin (Mo-MPT) cofactor (Moco or molybdenum cofactor) to form Mo-molybdopterin guanine dinucleotide (Mo-MGD) cofactor. The protein is Molybdenum cofactor guanylyltransferase of Helicobacter pylori (strain J99 / ATCC 700824) (Campylobacter pylori J99).